Consider the following 345-residue polypeptide: MSEETSIPGIIASTPPISKDSRRNVSHWLQALAVFLHSVSLTLTASWYTVLWAFLPFWPFLIVYLIWLIYDDGFVTGKDRQKRWLRNAPPYRWFCHYFPIRLHKTTELDSEKNYIFGYHPHGIISLGAFGGFASEGADFSKLFPGINVSVLTLNSNFYVPVYRDYLMALNINSVSKKSCVSILSRKPGDSVLIVIGGAQESLLSRPGQNNLVLKKRFGFVKLAFLTGSSLVPCFAFGESDIFEQVDNNPRTRIYKFQEIVKKIAGFTVPFFYGRGLLNKTFGLMPWRKPINIVVGEPIDVPKKSHPTNQEIYEVHEEYIRRLEGLWNKYKDVFLPNRISELKLSA.

The Cytoplasmic segment spans residues Met1–Thr49. The helical transmembrane segment at Val50 to Tyr70 threads the bilayer. Over Asp71–Asn113 the chain is Lumenal. A helical transmembrane segment spans residues Tyr114 to Ser134. Residues Glu135–Lys141 are Cytoplasmic-facing. A helical membrane pass occupies residues Leu142–Tyr162. Over Arg163 to Arg216 the chain is Lumenal. The chain crosses the membrane as a helical span at residues Phe217–Gly237. Residues Glu238 to Ala345 are Cytoplasmic-facing.

This sequence belongs to the diacylglycerol acyltransferase family.

It localises to the lipid droplet. The protein localises to the endoplasmic reticulum membrane. It catalyses the reaction an acyl-CoA + a 1,2-diacyl-sn-glycerol = a triacyl-sn-glycerol + CoA. The catalysed reaction is a 2-acylglycerol + an acyl-CoA = a 1,2-diacyl-sn-glycerol + CoA. It participates in glycerolipid metabolism; triacylglycerol biosynthesis. Catalyzes the terminal and only committed step in triacylglycerol (TAG) synthesis by using diacylglycerol (DAG) and fatty acyl-CoA as substrates. Required for storage lipid synthesis. Major DAG esterifying enzyme in stationary phase when TAG production is particularly active. Involved in lipid particle synthesis from the endoplasmic reticulum, promoting localized TAG production at discrete ER subdomains. This Schizosaccharomyces pombe (strain 972 / ATCC 24843) (Fission yeast) protein is Diacylglycerol O-acyltransferase 1 (dga1).